Reading from the N-terminus, the 481-residue chain is MGKQEDAELVIIPFPFSGHILATIELAKRLISQDNPRIHTITILYWGLPFIPQADTIAFLRSLVKNEPRIRLVTLPEVQDPPPMELFVEFAESYILEYVKKMVPIIREALSTLLSSRDESGSVRVAGLVLDFFCVPMIDVGNEFNLPSYIFLTCSAGFLGMMKYLPERHREIKSEFNRSFNEELNLIPGYVNSVPTKVLPSGLFMKETYEPWVELAERFPEAKGILVNSYTALEPNGFKYFDRCPDNYPTIYPIGPILCSNDRPNLDSSERDRIITWLDDQPESSVVFLCFGSLKNLSATQINEIAQALEIVDCKFIWSFRTNPKEYASPYEALPHGFMDRVMDQGIVCGWAPQVEILAHKAVGGFVSHCGWNSILESLGFGVPIATWPMYAEQQLNAFTMVKELGLALEMRLDYVSEDGDIVKADEIAGTVRSLMDGVDVPKSKVKEIAEAGKEAVDGGSSFLAVKRFIGDLIDGVSISK.

His-19 (proton acceptor) is an active-site residue. Position 19 (His-19) interacts with an anthocyanidin. Catalysis depends on Asp-131, which acts as the Charge relay. Residues Thr-153, Ala-352, Gln-354, His-369, Trp-372, Asn-373, Ser-374, and Glu-377 each coordinate UDP-alpha-D-glucose. Ala-392 serves as a coordination point for an anthocyanidin. UDP-alpha-D-glucose-binding residues include Glu-393 and Gln-394.

This sequence belongs to the UDP-glycosyltransferase family.

It carries out the reaction a flavonol + UDP-alpha-D-glucose = a flavonol 3-O-beta-D-glucoside + UDP + H(+). It catalyses the reaction a 7-O-hydroxy-flavonol + UDP-alpha-D-glucose = a flavonol 7-O-beta-D-glucoside + UDP + H(+). In terms of biological role, possesses quercetin 7-O-glucosyltransferase and 3'-O-glucosyltransferase activities in vitro. Also active in vitro on benzoates and benzoate derivatives. Glucosylates other secondary metabolites in vitro like trans-resveratrol, curcumin, vanillin and etoposide. The protein is Flavonol 3-O-glucosyltransferase UGT71C1 of Arabidopsis thaliana (Mouse-ear cress).